We begin with the raw amino-acid sequence, 457 residues long: 1-carboxybiuret hydrolase subunit AtzE (457 aa).

Residues Lys74 and Ser150 each act as charge relay system in the active site. Ser174 acts as the Acyl-ester intermediate in catalysis.

This sequence belongs to the amidase family. Heterotetramer consisting of 2 AtzE and 2 AtzG subunits.

The enzyme catalyses 1-carboxybiuret + H2O = urea-1,3-dicarboxylate + NH4(+). It functions in the pathway xenobiotic degradation; atrazine degradation. Its function is as follows. Hydrolyzes 1-carboxybiuret to urea-1,3-dicarboxylate and NH(3). The chain is 1-carboxybiuret hydrolase subunit AtzE from Pseudomonas sp. (strain ADP).